Reading from the N-terminus, the 66-residue chain is Surface composition regulator (66 aa).

The protein belongs to the GlgS family.

In terms of biological role, major determinant of cell surface composition. Negatively regulates motility, adhesion and synthesis of biofilm exopolysaccharides. In Escherichia coli O127:H6 (strain E2348/69 / EPEC), this protein is Surface composition regulator.